The chain runs to 181 residues: Large ribosomal subunit protein uL5c (181 aa).

The protein belongs to the universal ribosomal protein uL5 family. Part of the 50S ribosomal subunit; contacts the 5S rRNA.

The protein resides in the plastid. The protein localises to the cyanelle. Functionally, binds 5S rRNA, forms part of the central protuberance of the 50S subunit. The chain is Large ribosomal subunit protein uL5c (rpl5) from Cyanophora paradoxa.